Here is a 225-residue protein sequence, read N- to C-terminus: MSESHIDFRKAEFLISAPDIAHLNEYLPGDVGVEIAFAGRSNAGKSSALNLLTEQKIARTSKTPGRTQLINVFRLDKHRRLVDLPGYGFAQVPLALKLKWQESLGEYLLKRDCLSGVVVLMDIRHPLKDLDMQMIEWAVESHIPVLALLTKADKLGQSARMKMVNEVRKKLSHFEDGVKVEPFSSLKGIGKGKVLGILDSWCKPEWLMQQLEADAIAAQAEADKD.

The 174-residue stretch at 31–204 (VGVEIAFAGR…LGILDSWCKP (174 aa)) folds into the EngB-type G domain. Residues 39–46 (GRSNAGKS), 65–69 (GRTQL), 83–86 (DLPG), 150–153 (TKAD), and 183–185 (FSS) contribute to the GTP site. Mg(2+) contacts are provided by Ser46 and Thr67.

The protein belongs to the TRAFAC class TrmE-Era-EngA-EngB-Septin-like GTPase superfamily. EngB GTPase family. Mg(2+) is required as a cofactor.

Necessary for normal cell division and for the maintenance of normal septation. This chain is Probable GTP-binding protein EngB, found in Shewanella pealeana (strain ATCC 700345 / ANG-SQ1).